The primary structure comprises 79 residues: uncharacterized protein (79 aa).

A signal peptide spans 1 to 18 (MQIKNIVAVLATVTAINA). The tract at residues 24 to 44 (PNATTPNATQPNATQPNTTLP) is disordered. Residues Asn-25, Asn-30, Asn-35, and Asn-40 are each glycosylated (N-linked (GlcNAc...) asparagine). Gly-55 carries GPI-anchor amidated glycine lipidation. A propeptide spans 56-79 (EAVVNTMAAGAFGAAIAAGVAFLF) (removed in mature form).

The protein localises to the cell membrane. This is an uncharacterized protein from Saccharomyces cerevisiae (strain ATCC 204508 / S288c) (Baker's yeast).